We begin with the raw amino-acid sequence, 105 residues long: ATP-dependent Clp protease adapter protein ClpS (105 aa).

The protein belongs to the ClpS family. In terms of assembly, binds to the N-terminal domain of the chaperone ClpA.

In terms of biological role, involved in the modulation of the specificity of the ClpAP-mediated ATP-dependent protein degradation. The polypeptide is ATP-dependent Clp protease adapter protein ClpS (Klebsiella pneumoniae (strain 342)).